The primary structure comprises 81 residues: Photosystem I iron-sulfur center (81 aa).

2 4Fe-4S ferredoxin-type domains span residues 2–31 (SHTV…MVPW) and 39–68 (IASS…IRVY). Positions 11, 14, 17, 21, 48, 51, 54, and 58 each coordinate [4Fe-4S] cluster.

The cyanobacterial PSI reaction center is composed of one copy each of PsaA,B,C,D,E,F,I,J,K,L,M and X, and forms trimeric complexes. [4Fe-4S] cluster is required as a cofactor.

It localises to the cellular thylakoid membrane. It catalyses the reaction reduced [plastocyanin] + hnu + oxidized [2Fe-2S]-[ferredoxin] = oxidized [plastocyanin] + reduced [2Fe-2S]-[ferredoxin]. In terms of biological role, apoprotein for the two 4Fe-4S centers FA and FB of photosystem I (PSI); essential for photochemical activity. FB is the terminal electron acceptor of PSI, donating electrons to ferredoxin. The C-terminus interacts with PsaA/B/D and helps assemble the protein into the PSI complex. Required for binding of PsaD and PsaE to PSI. PSI is a plastocyanin/cytochrome c6-ferredoxin oxidoreductase, converting photonic excitation into a charge separation, which transfers an electron from the donor P700 chlorophyll pair to the spectroscopically characterized acceptors A0, A1, FX, FA and FB in turn. The sequence is that of Photosystem I iron-sulfur center from Microchaete diplosiphon (Fremyella diplosiphon).